The following is a 263-amino-acid chain: MNYLNKIRIENPLTICYTNDVVKNFTANGLLSIGASPAMSEAPEEAEEFYKVAQALLINIGTLTAENEQDIIAIAQTANEAGLPIVFDPVAVGASTYRKQFCKLLLKSAKVSVIKGNASEILALIDDTATMKGTDSDANLDAVAIAKKAYATYKTAIVITGKEDVIVQDNKAFVLANGSPLLARVTGAGCLLGGVIAGFLFRETEPDIEALIEAVSVFNIAAEVAAENENCGGPGTFSPLLLDTLYHLNETTYQQRIRIQEVE.

A substrate-binding site is contributed by Met39. ATP is bound by residues Lys115 and Thr160. A substrate-binding site is contributed by Gly187.

Belongs to the Thz kinase family. Mg(2+) serves as cofactor.

The catalysed reaction is 5-(2-hydroxyethyl)-4-methylthiazole + ATP = 4-methyl-5-(2-phosphooxyethyl)-thiazole + ADP + H(+). It functions in the pathway cofactor biosynthesis; thiamine diphosphate biosynthesis; 4-methyl-5-(2-phosphoethyl)-thiazole from 5-(2-hydroxyethyl)-4-methylthiazole: step 1/1. Functionally, catalyzes the phosphorylation of the hydroxyl group of 4-methyl-5-beta-hydroxyethylthiazole (THZ). The chain is Hydroxyethylthiazole kinase from Staphylococcus aureus (strain COL).